The following is a 507-amino-acid chain: Desmethyl-deoxy-podophyllotoxin synthase (507 aa).

Residues 1 to 21 (MEFLSFPLSSALLIILLFMLV) form a helical membrane-spanning segment. Heme is bound at residue C440.

This sequence belongs to the cytochrome P450 family. It depends on heme as a cofactor. Rhizome-specific expression.

The protein resides in the membrane. It carries out the reaction (-)-deoxypodophyllotoxin + reduced [NADPH--hemoprotein reductase] + O2 = (-)-4'-desmethyl-deoxypodophyllotoxin + formaldehyde + oxidized [NADPH--hemoprotein reductase] + H2O + H(+). The protein operates within aromatic compound metabolism; phenylpropanoid biosynthesis. In terms of biological role, cytochrome P450 involved in the biosynthesis of etoposide, a chemotherapeutic compound of the topoisomerase inhibitor family. Catalyzes the conversion of deoxypodophyllotoxin to desmethyl-deoxypodophyllotoxin. This is Desmethyl-deoxy-podophyllotoxin synthase from Sinopodophyllum hexandrum (Himalayan may apple).